A 1061-amino-acid polypeptide reads, in one-letter code: Atrial natriuretic peptide receptor 1 (1061 aa).

The signal sequence occupies residues 1-32 (MPGPRRPAGSRLRLLLLLLLPPLLLLLRGSHA). Residues 33–473 (GNLTVAVVLP…CNQDHLSTLE (441 aa)) are Extracellular-facing. Residues asparagine 34 and asparagine 45 are each glycosylated (N-linked (GlcNAc...) asparagine). Positions 85, 117, and 118 each coordinate chloride. Intrachain disulfides connect cysteine 92–cysteine 118 and cysteine 196–cysteine 245. N-linked (GlcNAc...) asparagine glycosylation is found at asparagine 212, asparagine 338, asparagine 379, asparagine 386, and asparagine 427. The cysteines at positions 455 and 464 are disulfide-linked. A helical transmembrane segment spans residues 474 to 494 (VLALVGSLSLLGILIVSFFIY). At 495–1061 (RKMQLEKELA…LGERGSSTRG (567 aa)) the chain is on the cytoplasmic side. Residues serine 519 and serine 529 each carry the phosphoserine modification. The 278-residue stretch at 528–805 (GSRLTLSGRG…QIRLTLRKFN (278 aa)) folds into the Protein kinase domain. Threonine 532 bears the Phosphothreonine mark. 3 positions are modified to phosphoserine: serine 534, serine 538, and serine 542. Threonine 545 is modified (phosphothreonine). Residues 876-1006 (TIYFSDIVGF…DTVNTASRME (131 aa)) form the Guanylate cyclase domain.

Belongs to the adenylyl cyclase class-4/guanylyl cyclase family. Homodimer. Phosphorylation of the protein kinase-like domain is required for full activation by ANP.

It is found in the membrane. The catalysed reaction is GTP = 3',5'-cyclic GMP + diphosphate. In terms of biological role, receptor for the atrial natriuretic peptide NPPA/ANP and the brain natriuretic peptide NPPB/BNP which are potent vasoactive hormones playing a key role in cardiovascular homeostasis. Plays an essential role in the regulation of endothelial cell senescence and vascular aging. Upon activation by ANP or BNP, stimulates the production of cyclic guanosine monophosphate (cGMP) that promotes vascular tone and volume homeostasis by activation of protein kinase cGMP-dependent 1/PRKG1 and subsequently PRKAA1, thereby controlling blood pressure and maintaining cardiovascular homeostasis. The chain is Atrial natriuretic peptide receptor 1 from Homo sapiens (Human).